The chain runs to 154 residues: Xanthine-guanine phosphoribosyltransferase (154 aa).

5-phospho-alpha-D-ribose 1-diphosphate contacts are provided by residues 37–38, arginine 69, and 88–96; these read RG and EDLVDSGDT. Arginine 69 contacts GMP. A Mg(2+)-binding site is contributed by aspartate 89. Aspartate 92 and isoleucine 135 together coordinate guanine. Xanthine is bound by residues aspartate 92 and isoleucine 135. GMP-binding positions include 92-96 and 134-135; these read DSGDT and WI.

It belongs to the purine/pyrimidine phosphoribosyltransferase family. XGPT subfamily. Homotetramer. Mg(2+) is required as a cofactor.

It is found in the cell inner membrane. The enzyme catalyses GMP + diphosphate = guanine + 5-phospho-alpha-D-ribose 1-diphosphate. The catalysed reaction is XMP + diphosphate = xanthine + 5-phospho-alpha-D-ribose 1-diphosphate. It carries out the reaction IMP + diphosphate = hypoxanthine + 5-phospho-alpha-D-ribose 1-diphosphate. It functions in the pathway purine metabolism; GMP biosynthesis via salvage pathway; GMP from guanine: step 1/1. It participates in purine metabolism; XMP biosynthesis via salvage pathway; XMP from xanthine: step 1/1. Purine salvage pathway enzyme that catalyzes the transfer of the ribosyl-5-phosphate group from 5-phospho-alpha-D-ribose 1-diphosphate (PRPP) to the N9 position of the 6-oxopurines guanine and xanthine to form the corresponding ribonucleotides GMP (guanosine 5'-monophosphate) and XMP (xanthosine 5'-monophosphate), with the release of PPi. To a lesser extent, also acts on hypoxanthine. This is Xanthine-guanine phosphoribosyltransferase from Vibrio atlanticus (strain LGP32) (Vibrio splendidus (strain Mel32)).